We begin with the raw amino-acid sequence, 61 residues long: Photosystem II reaction center protein K (61 aa).

Positions 1–24 are excised as a propeptide; that stretch reads MINIFSFICIYLHSALYSSSFFFG. The helical transmembrane segment at 40–60 threads the bilayer; sequence MPVIPLFFFLLAFVWQAAVSF.

The protein belongs to the PsbK family. As to quaternary structure, PSII is composed of 1 copy each of membrane proteins PsbA, PsbB, PsbC, PsbD, PsbE, PsbF, PsbH, PsbI, PsbJ, PsbK, PsbL, PsbM, PsbT, PsbX, PsbY, PsbZ, Psb30/Ycf12, at least 3 peripheral proteins of the oxygen-evolving complex and a large number of cofactors. It forms dimeric complexes.

It localises to the plastid. The protein localises to the chloroplast thylakoid membrane. In terms of biological role, one of the components of the core complex of photosystem II (PSII). PSII is a light-driven water:plastoquinone oxidoreductase that uses light energy to abstract electrons from H(2)O, generating O(2) and a proton gradient subsequently used for ATP formation. It consists of a core antenna complex that captures photons, and an electron transfer chain that converts photonic excitation into a charge separation. The polypeptide is Photosystem II reaction center protein K (Pelargonium hortorum (Common geranium)).